The primary structure comprises 467 residues: Glutamate--tRNA ligase (467 aa).

The 'HIGH' region signature appears at 9-19 (PSPTGYLHIGG). Residues 237–241 (KLSKR) carry the 'KMSKS' region motif. Lysine 240 provides a ligand contact to ATP.

It belongs to the class-I aminoacyl-tRNA synthetase family. Glutamate--tRNA ligase type 1 subfamily. As to quaternary structure, monomer.

It is found in the cytoplasm. The enzyme catalyses tRNA(Glu) + L-glutamate + ATP = L-glutamyl-tRNA(Glu) + AMP + diphosphate. In terms of biological role, catalyzes the attachment of glutamate to tRNA(Glu) in a two-step reaction: glutamate is first activated by ATP to form Glu-AMP and then transferred to the acceptor end of tRNA(Glu). The sequence is that of Glutamate--tRNA ligase from Stenotrophomonas maltophilia (strain R551-3).